A 703-amino-acid polypeptide reads, in one-letter code: MFEDVFSDSGNTGNFDRGKKRRLTIIECGCDINMMIDLAKVADLVLMLIDASFGFEMEMFEFLNICQAHGFPKILGVLTHLDSFKHNKQLKKTKKRLKHRFWTEVYQDKVGLTHELVQSLISTYSTIDAKMASSRVTLLSNSKPLGSEAIDNQGVSLEFDQQQGSVCPSESEIYEAGAEDRMAGAPMAAAVQPAEVTVEVGEDLHMHQVRDREMPEVVEIRRSNCTNHCDLGDTSSYHTKVSTVHIMKKRNGGGSLNNYSSSIPPTPSTSQEDPQFSVPPTANTPTPVCKRSMRWSNLFTSEKGSDPDKERKAPENHADTIGSGRAIPIKQGMLLKRSGKWLKTWKKKYVTLCSNGVLTYYSSLGDYMKNIHKKEIDLRTSTIKVPGKWPSLATSACAPISSSKSNGLSKDMDTGLGDSICFSPGISSTTSPKLNPPPSPHANKKKHLKKKSTNNFMIVSATGQTWHFEATTYEERDAWVQAIQSQILASLQSCKSSKSKSQLTSQSEAMALQSIQNMRGNAHCVDCETQNPKWASLNLGVLMCIECSGIHRSFGTRLSRVRSLELDDWPVELRKVMSSIGNELANSIWEGSSQGQTKPSIKSTREEKEWWIRSKYEEKLFLAPLPCTELSLGQQLLRATTDEDLQTAILLLAHGSREEVNETCGEGDGCTALHLACRKGNVVLEQLLTGWTSWPEMPTGTQR.

3 disordered regions span residues 249 to 287 (KRNG…TPTP), 299 to 323 (FTSE…TIGS), and 427 to 449 (SSTT…KHLK). Polar residues predominate over residues 271–286 (QEDPQFSVPPTANTPT). Basic and acidic residues predominate over residues 303–318 (KGSDPDKERKAPENHA). Residues 327-488 (IPIKQGMLLK…WVQAIQSQIL (162 aa)) form the PH domain. The Arf-GAP domain occupies 509–629 (AMALQSIQNM…LFLAPLPCTE (121 aa)). A C4-type zinc finger spans residues 524 to 547 (CVDCETQNPKWASLNLGVLMCIEC). One copy of the ANK repeat lies at 631-700 (SLGQQLLRAT…WTSWPEMPTG (70 aa)).

This sequence belongs to the centaurin gamma-like family.

Its function is as follows. Putative GTPase-activating protein. This Homo sapiens (Human) protein is Arf-GAP with GTPase, ANK repeat and PH domain-containing protein 9 (AGAP9).